A 40-amino-acid polypeptide reads, in one-letter code: Photosystem II reaction center protein J (40 aa).

The chain crosses the membrane as a helical span at residues 8-28 (IPLWLIGTVAGIAVIGLVGVF).

The protein belongs to the PsbJ family. In terms of assembly, PSII is composed of 1 copy each of membrane proteins PsbA, PsbB, PsbC, PsbD, PsbE, PsbF, PsbH, PsbI, PsbJ, PsbK, PsbL, PsbM, PsbT, PsbX, PsbY, PsbZ, Psb30/Ycf12, at least 3 peripheral proteins of the oxygen-evolving complex and a large number of cofactors. It forms dimeric complexes.

It is found in the plastid. The protein localises to the chloroplast thylakoid membrane. One of the components of the core complex of photosystem II (PSII). PSII is a light-driven water:plastoquinone oxidoreductase that uses light energy to abstract electrons from H(2)O, generating O(2) and a proton gradient subsequently used for ATP formation. It consists of a core antenna complex that captures photons, and an electron transfer chain that converts photonic excitation into a charge separation. This chain is Photosystem II reaction center protein J, found in Secale cereale (Rye).